The sequence spans 225 residues: Interleukin-6 (225 aa).

An N-terminal signal peptide occupies residues 1-24; sequence MPSRLNVFWLCAAALAALLRCAPA. A glycan (N-linked (GlcNAc...) asparagine) is linked at Asn98.

The protein belongs to the IL-6 superfamily. Component of a hexamer of two molecules each of IL6, IL6R and IL6ST; first binds to IL6R to associate with the signaling subunit IL6ST. As to expression, expressed in white muscle, skin, spleen, anterior intestine and stomach. Not expressed in brain, gill, head kidney, posterior intestine and adipose tissue.

The protein localises to the secreted. Functionally, cytokine with a wide variety of biological functions in immunity, tissue regeneration, and metabolism. Binds to IL6R, then the complex associates to the signaling subunit IL6ST/gp130 to trigger the intracellular IL6-signaling pathway. The interaction with the membrane-bound IL6R and IL6ST stimulates 'classic signaling', whereas the binding of IL6 and soluble IL6R to IL6ST stimulates 'trans-signaling'. Alternatively, 'cluster signaling' occurs when membrane-bound IL6:IL6R complexes on transmitter cells activate IL6ST receptors on neighboring receiver cells. This chain is Interleukin-6 (il6), found in Sparus aurata (Gilthead sea bream).